Consider the following 393-residue polypeptide: MRKIMINFPLASSTWDEKELNAIQRIIDSNMFTMGESVKQYEKDFAEYFGSKYSVMVSSGSTANLLMIAALFFTKKPKFKRGDEVIVPAVSWSTTYFPLQQYGLNVRFVDIDKKTLNIDLDKLKSAITEKTKAILAVNLLGNPNDFDAITKITEGKDIFILEDNCESMGARLNGKQAGTYGLMGTFSSFFSHHIATMEGGCVITDDEELYHILLCIRAHGWTRNLPEFNHITGQKSIDPFEESFKFVLPGYNVRPLEMSGAIGIEQLKKLPSFIEMRRKNATIFKELFSSHPYIDIQQETGESSWFGFALILKESSPITRAELVKKLIEAGIECRPIVTGNFLKNKEVLKFFDYTIAGEVTDAEYIDKHGLFVGNHQIDLSEQIKNLFNILKK.

30-33 (NMFT) lines the GDP-4-dehydro-alpha-D-rhamnose pocket. Residues 53–73 (YSVMVSSGSTANLLMIAALFF) traverse the membrane as a helical segment. Pyridoxal 5'-phosphate contacts are provided by residues 60-61 (GS), Trp92, Glu166, and Ser187. The Proton donor/acceptor role is filled by His192. His219 provides a ligand contact to L-glutamate. Arg223 is a GDP-4-dehydro-alpha-D-rhamnose binding site. Asn252 is a pyridoxal 5'-phosphate binding site. Arg254 is an L-glutamate binding site. A GDP-4-dehydro-alpha-D-rhamnose-binding site is contributed by Glu333.

The protein belongs to the DegT/DnrJ/EryC1 family. Homodimer. It depends on pyridoxal 5'-phosphate as a cofactor.

The protein resides in the cell membrane. It catalyses the reaction GDP-4-dehydro-alpha-D-rhamnose + L-glutamate = GDP-4-dehydro-3,6-dideoxy-alpha-D-mannose + 2-oxoglutarate + NH4(+). Its pathway is nucleotide-sugar metabolism; GDP-L-colitose biosynthesis. Its function is as follows. Involved in the biosynthesis of L-colitose, a 3,6-dideoxyhexose present in the O-antigen region of lipopolysaccharides (LPS), where it serves as an antigenic determinant and is vital for bacterial defense and survival. Catalyzes the removal of the C3'-hydroxyl group from GDP-4-keto-6-deoxy-D-mannose via a combined transamination-deoxygenation reaction. The catalysis is initiated by a transamination step in which pyridoxal 5'-phosphate (PLP) is converted to pyridoxamine 5'-phosphate (PMP) in the presence of L-glutamate. This coenzyme then forms a Schiff base with GDP-4-keto-6-deoxy-D-mannose and the resulting adduct undergoes a PMP-mediated beta-dehydration reaction to give a sugar enamine intermediate, which after tautomerization and hydrolysis to release ammonia yields GDP-4-keto-3,6-dideoxy-D-mannose as a product. This Yersinia pseudotuberculosis protein is GDP-4-keto-6-deoxy-D-mannose 3-dehydratase.